We begin with the raw amino-acid sequence, 1445 residues long: DNA-directed RNA polymerase subunit beta'' (1445 aa).

Cys-220, Cys-293, Cys-300, and Cys-303 together coordinate Zn(2+).

It belongs to the RNA polymerase beta' chain family. RpoC2 subfamily. In plastids the minimal PEP RNA polymerase catalytic core is composed of four subunits: alpha, beta, beta', and beta''. When a (nuclear-encoded) sigma factor is associated with the core the holoenzyme is formed, which can initiate transcription. Zn(2+) is required as a cofactor.

It localises to the plastid. The protein resides in the chloroplast. It catalyses the reaction RNA(n) + a ribonucleoside 5'-triphosphate = RNA(n+1) + diphosphate. Functionally, DNA-dependent RNA polymerase catalyzes the transcription of DNA into RNA using the four ribonucleoside triphosphates as substrates. This Anthoceros angustus (Hornwort) protein is DNA-directed RNA polymerase subunit beta''.